The sequence spans 535 residues: EGF domain-specific O-linked N-acetylglucosamine transferase (535 aa).

The first 16 residues, 1 to 16, serve as a signal peptide directing secretion; sequence MFILLMFVLLLQEILA. Residues Asn-22 and Asn-271 are each glycosylated (N-linked (GlcNAc...) asparagine). A Required for optimal activity motif is present at residues 303 to 305; sequence DYD. Asn-362 and Asn-501 each carry an N-linked (GlcNAc...) asparagine glycan.

This sequence belongs to the glycosyltransferase 61 family.

Its subcellular location is the endoplasmic reticulum lumen. The catalysed reaction is L-seryl-[protein] + UDP-N-acetyl-alpha-D-glucosamine = 3-O-(N-acetyl-beta-D-glucosaminyl)-L-seryl-[protein] + UDP + H(+). It carries out the reaction L-threonyl-[protein] + UDP-N-acetyl-alpha-D-glucosamine = 3-O-(N-acetyl-beta-D-glucosaminyl)-L-threonyl-[protein] + UDP + H(+). Functionally, catalyzes the transfer of a single N-acetylglucosamine from UDP-GlcNAc to a serine or threonine residue in extracellular proteins resulting in their modification with a beta-linked N-acetylglucosamine (O-GlcNAc). Specifically glycosylates the Thr residue located between the fifth and sixth conserved cysteines of folded EGF-like domains. This is EGF domain-specific O-linked N-acetylglucosamine transferase (EOGT) from Gallus gallus (Chicken).